The sequence spans 564 residues: Beta-N-acetylglucosaminidase/beta-glucosidase (564 aa).

The Nucleophile role is filled by D283.

Belongs to the glycosyl hydrolase 3 family.

It carries out the reaction Hydrolysis of terminal non-reducing N-acetyl-D-hexosamine residues in N-acetyl-beta-D-hexosaminides.. The catalysed reaction is Hydrolysis of terminal, non-reducing beta-D-glucosyl residues with release of beta-D-glucose.. In terms of biological role, catalyzes the cleavage of beta-N-acetyl-D-glucosaminides and beta-D-glucosides. Might be involved in the degradation of glucuronic acid-containing glycosaminoglycans such as hyaluronic acid. The protein is Beta-N-acetylglucosaminidase/beta-glucosidase (nag3) of Cellulomonas fimi.